The chain runs to 160 residues: ATP synthase subunit b (160 aa).

Residues 5 to 27 (IEQILTQIIAFLIMLGVLKKFVW) form a helical membrane-spanning segment.

It belongs to the ATPase B chain family. In terms of assembly, F-type ATPases have 2 components, F(1) - the catalytic core - and F(0) - the membrane proton channel. F(1) has five subunits: alpha(3), beta(3), gamma(1), delta(1), epsilon(1). F(0) has three main subunits: a(1), b(2) and c(10-14). The alpha and beta chains form an alternating ring which encloses part of the gamma chain. F(1) is attached to F(0) by a central stalk formed by the gamma and epsilon chains, while a peripheral stalk is formed by the delta and b chains.

It is found in the cell inner membrane. Its function is as follows. F(1)F(0) ATP synthase produces ATP from ADP in the presence of a proton or sodium gradient. F-type ATPases consist of two structural domains, F(1) containing the extramembraneous catalytic core and F(0) containing the membrane proton channel, linked together by a central stalk and a peripheral stalk. During catalysis, ATP synthesis in the catalytic domain of F(1) is coupled via a rotary mechanism of the central stalk subunits to proton translocation. Functionally, component of the F(0) channel, it forms part of the peripheral stalk, linking F(1) to F(0). This chain is ATP synthase subunit b, found in Protochlamydia amoebophila (strain UWE25).